Consider the following 342-residue polypeptide: dTDP-3,4-didehydro-2,6-dideoxy-alpha-D-glucose 3-reductase (342 aa).

19–25 (CADIALR) lines the NADP(+) pocket. Arg-26 is a binding site for substrate. NADP(+) contacts are provided by residues 44 to 45 (SR), Tyr-65, Leu-81, and His-86. Residue Lys-104 is the Proton donor of the active site. Arg-172 and Asp-184 together coordinate NADP(+). Residues Tyr-243 and Ser-263 each contribute to the substrate site.

It belongs to the Gfo/Idh/MocA family.

The catalysed reaction is dTDP-4-dehydro-2,6-dideoxy-alpha-D-glucose + NADP(+) = dTDP-3,4-didehydro-2,6-dideoxy-alpha-D-glucose + NADPH + H(+). Its pathway is antibiotic biosynthesis; granaticin biosynthesis. In terms of biological role, involved in the biosynthesis of the 2,6-deoxysugar, dTDP-L-rhodinose, attached to the benzoisochromane quinone chromophore to produce the aglycone antibiotics granaticin and granaticin B. Catalyzes the reduction of the C-3 keto moiety of dTDP-3,4-diketo-2,6-dideoxy-alpha-D-glucose to yield dTDP-4-keto-2,6-dideoxy-alpha-D-glucose. NADPH is the better reductant, however NADH can also be used. This is dTDP-3,4-didehydro-2,6-dideoxy-alpha-D-glucose 3-reductase from Streptomyces violaceoruber.